A 157-amino-acid polypeptide reads, in one-letter code: 6,7-dimethyl-8-ribityllumazine synthase (157 aa).

5-amino-6-(D-ribitylamino)uracil-binding positions include Phe22, 57–59 (AYE), and 81–83 (TVI). 86–87 (GT) lines the (2S)-2-hydroxy-3-oxobutyl phosphate pocket. His89 (proton donor) is an active-site residue. 5-amino-6-(D-ribitylamino)uracil is bound at residue Phe114. Arg128 is a (2S)-2-hydroxy-3-oxobutyl phosphate binding site.

The protein belongs to the DMRL synthase family. In terms of assembly, forms an icosahedral capsid composed of 60 subunits, arranged as a dodecamer of pentamers.

The enzyme catalyses (2S)-2-hydroxy-3-oxobutyl phosphate + 5-amino-6-(D-ribitylamino)uracil = 6,7-dimethyl-8-(1-D-ribityl)lumazine + phosphate + 2 H2O + H(+). It functions in the pathway cofactor biosynthesis; riboflavin biosynthesis; riboflavin from 2-hydroxy-3-oxobutyl phosphate and 5-amino-6-(D-ribitylamino)uracil: step 1/2. Functionally, catalyzes the formation of 6,7-dimethyl-8-ribityllumazine by condensation of 5-amino-6-(D-ribitylamino)uracil with 3,4-dihydroxy-2-butanone 4-phosphate. This is the penultimate step in the biosynthesis of riboflavin. The sequence is that of 6,7-dimethyl-8-ribityllumazine synthase from Pasteurella multocida (strain Pm70).